The chain runs to 272 residues: Orotidine 5'-phosphate decarboxylase (272 aa).

The active-site Proton donor is Lys-95.

Belongs to the OMP decarboxylase family. Type 2 subfamily.

The catalysed reaction is orotidine 5'-phosphate + H(+) = UMP + CO2. It functions in the pathway pyrimidine metabolism; UMP biosynthesis via de novo pathway; UMP from orotate: step 2/2. The sequence is that of Orotidine 5'-phosphate decarboxylase from Bordetella avium (strain 197N).